The chain runs to 495 residues: Probable polyamine transporter At1g31830 (495 aa).

The next 11 helical transmembrane spans lie at 49–69, 79–99, 112–132, 156–176, 186–206, 230–250, 267–287, 357–377, 380–400, 417–437, and 442–462; these read VSML…PFGV, LLAL…EALI, GYVV…QGWM, VPAL…TILL, IVGW…AVMG, LYLN…TLAG, VILV…AIPL, TPLL…WLSF, IVAA…IAFV, IGTT…CAVV, and LKVA…HPLL.

This sequence belongs to the amino acid-polyamine-organocation (APC) superfamily. Polyamine:cation symporter (PHS) (TC 2.A.3.12) family.

The protein localises to the cell membrane. In terms of biological role, probable cell membrane polyamine/proton symporter involved in the polyamine uptake in cells. In Arabidopsis thaliana (Mouse-ear cress), this protein is Probable polyamine transporter At1g31830.